A 446-amino-acid polypeptide reads, in one-letter code: Chromogranin-A (446 aa).

The signal sequence occupies residues 1-16 (SAAALALLLCAGQVIA). Cys33 and Cys54 are disulfide-bonded. Positions 85–426 (AKERSHQQKK…RPEDQELESL (342 aa)) are disordered. Position 97 is a phosphoserine (Ser97). Positions 105-138 (VLEKQNDQAELKEGTEEASSKEAAEKRGDSKEVE) are enriched in basic and acidic residues. Positions 160–171 (EAEDQTPGEEEA) are enriched in acidic residues. At Ser209 the chain carries Phosphoserine. Residues 226-243 (AGEKAVPEEEGPRSEAFD) show a composition bias toward basic and acidic residues. Ser286 is modified (phosphoserine). At Gly304 the chain carries Glycine amide. Ser319 carries the phosphoserine modification. Basic and acidic residues predominate over residues 319–346 (SEEWENAKRWSKMDRLAKELTAEKRLQG). Residues 347–357 (EEEEEEEEEDP) are compositionally biased toward acidic residues. Ser360 carries the post-translational modification Phosphoserine. Met361 is subject to Methionine sulfoxide. Phosphoserine is present on residues Ser387, Ser391, Ser413, and Ser427. The segment covering 403–420 (YLEEKKEEEGSANRRPED) has biased composition (basic and acidic residues). O-linked (Xyl...) (chondroitin sulfate) serine glycosylation occurs at Ser413.

Belongs to the chromogranin/secretogranin protein family. In terms of assembly, self-interacts; self-assembly is promoted in vitro by chondroitin sulfate attachment which occurs at mildly acidic pH conditions. Interacts with SCG3. Interacts with ITPR1 in the secretory granules. In terms of processing, O-glycosylated; contains chondroitin sulfate (CS). CS attachment is pH-dependent, being observed at mildly acidic conditions of pH 5 but not at neutral pH, and promotes self-assembly in vitro. Post-translationally, parathyroid CHGA is sulfated on tyrosine residues, whereas adrenal CHGA seems to be mainly sulfated on oligosaccharide residues.

It is found in the secreted. The protein localises to the cytoplasmic vesicle. Its subcellular location is the secretory vesicle. The protein resides in the neuronal dense core vesicle. Its function is as follows. Strongly inhibits glucose induced insulin release from the pancreas. Inhibits low calcium-stimulated parathyroid cell secretion. In terms of biological role, inhibits catecholamine release from chromaffin cells and noradrenergic neurons by acting as a non-competitive nicotinic cholinergic antagonist. Can induce mast cell migration, degranulation and production of cytokines and chemokines. Functionally, regulates granule biogenesis in endocrine cells by up-regulating the transcription of protease nexin 1 (SERPINE2) via a cAMP-PKA-SP1 pathway. This leads to inhibition of granule protein degradation in the Golgi complex which in turn promotes granule formation. The sequence is that of Chromogranin-A (CHGA) from Sus scrofa (Pig).